We begin with the raw amino-acid sequence, 383 residues long: MDKLKIAEWGEKLKTGGAQMSRMVSEKVKDMLQAPTLESKMVDEATLETLEEPNWGMNMRICAQINNDEFNGTEIVRAIKRKISGKSPVSQRLSLELLEACAMNCEKVFSEVASEKVLDEMVWLIKNGEADSENRKRAFQLIRAWGQSQDLTYLPVFHQTYMSLEGENGLHARGEENSMPGQSSLESLMQRPVPVPPPGSYPVPNQEQALGDDDGLDYNFGNLSIKDKKEQIEITRNSLELLSSMLNTEGKPNHTEDDLTVSLMEKCKQSQPLIQMIIESTTDDEGVLFEALHLNDELQQVLSSYKKPDETEKKASIVEQESSGSKDTGPKPTEQEEQEPVKKTGADDDKKHSEASGSSNKTVKEEKQAVKIELGLSSDEDEK.

The VHS domain maps to 45-178; the sequence is ATLETLEEPN…GLHARGEENS (134 aa). Positions 223-310 constitute a GAT domain; that stretch reads LSIKDKKEQI…VLSSYKKPDE (88 aa). The segment at 305–383 is disordered; sequence YKKPDETEKK…LGLSSDEDEK (79 aa). 2 stretches are compositionally biased toward basic and acidic residues: residues 306 to 316 and 339 to 354; these read KKPDETEKKAS and EPVK…KHSE. Phosphoserine occurs at positions 377 and 378.

This sequence belongs to the TOM1 family. In terms of tissue distribution, ubiquitously expressed.

It is found in the cytoplasm. The protein resides in the membrane. Its function is as follows. Binds ubiquitin in vitro. Might contribute to the loading of the ESCRT machinery. The chain is TOM1-like protein 2 from Arabidopsis thaliana (Mouse-ear cress).